Consider the following 317-residue polypeptide: HTH-type transcriptional repressor PA14_22550 (317 aa).

Residues 1 to 59 form the HTH lysR-type domain; it reads MDKLTAMATFVKVVDAGSFTRAADALGLPKARVSQRVSDLEKHLGVRLLNRTTRALSLT. The H-T-H motif DNA-binding region spans 19–38; sequence FTRAADALGLPKARVSQRVS.

It belongs to the LysR transcriptional regulatory family.

Functionally, represses the transcription of the operon that consists of PA14_22510 to PA14_22540. The chain is HTH-type transcriptional repressor PA14_22550 from Pseudomonas aeruginosa (strain UCBPP-PA14).